Consider the following 128-residue polypeptide: Aspartate 1-decarboxylase (128 aa).

S25 (schiff-base intermediate with substrate; via pyruvic acid) is an active-site residue. Position 25 is a pyruvic acid (Ser) (S25). Residue T57 coordinates substrate. Residue Y58 is the Proton donor of the active site. A substrate-binding site is contributed by 73-75 (GAA).

It belongs to the PanD family. In terms of assembly, heterooctamer of four alpha and four beta subunits. The cofactor is pyruvate. Is synthesized initially as an inactive proenzyme, which is activated by self-cleavage at a specific serine bond to produce a beta-subunit with a hydroxyl group at its C-terminus and an alpha-subunit with a pyruvoyl group at its N-terminus.

It localises to the cytoplasm. It carries out the reaction L-aspartate + H(+) = beta-alanine + CO2. It participates in cofactor biosynthesis; (R)-pantothenate biosynthesis; beta-alanine from L-aspartate: step 1/1. Functionally, catalyzes the pyruvoyl-dependent decarboxylation of aspartate to produce beta-alanine. This chain is Aspartate 1-decarboxylase, found in Ruminiclostridium cellulolyticum (strain ATCC 35319 / DSM 5812 / JCM 6584 / H10) (Clostridium cellulolyticum).